The primary structure comprises 238 residues: Ribosomal RNA small subunit methyltransferase G (238 aa).

S-adenosyl-L-methionine is bound by residues Gly-77, Phe-82, 128 to 129 (AE), and Arg-147. The disordered stretch occupies residues 219 to 238 (RQTPKKYPRKAGLPNKEPIE).

The protein belongs to the methyltransferase superfamily. RNA methyltransferase RsmG family.

It localises to the cytoplasm. In terms of biological role, specifically methylates the N7 position of guanine in position 535 of 16S rRNA. The sequence is that of Ribosomal RNA small subunit methyltransferase G from Oceanobacillus iheyensis (strain DSM 14371 / CIP 107618 / JCM 11309 / KCTC 3954 / HTE831).